Reading from the N-terminus, the 603-residue chain is MSSEHIQNKLALLPDQPGCYLMKDRQGTIIYVGKAKILKNRVRSYFSGTHDSKTQRLVQEIVDFEYIVTSSNVEALLLEINLIKKHDPRFNIRLKDDKTYPFIKITNERHPRLIITRQVKKDKGKYFGPYPNVYAANEVKRILDRLYPLRKCSTLPNKVCLYYHLGQCLAPCVFDVEASKYKEMQDEIVAFLNGGYKTVKNDLMKKMQEAAENMEFEKAGEFRDQINAIETTMEKQKMTMNDFVDRDVFGYAIDKGWMCVQVFFIRQGKLIERDVSQFPFYNDADEDFLTFIGQFYQKANHIPPKEIYLPDDVDSEAVQAVVPDTKIIVPQRGNKKDLVKLAYKNAKISLNEKFMLLERNEERTVGAVERLGEAMGIPTPSRVEAFDNSNIHGTDPVSAMVTFLDGKPSKNDYRKYKIKTVEGPDDYATMREVIRRRYWRVLKEGLPMPDLILIDGGKGQIDSAKDVLTNELGLDIPVAGLAKDDKHRTSQLLFGDPLEIVPLERNSQEFYLLQRMQDEVHRFAITFHRQLRSKTGFQSILDGIPGVGPGRKKKLLKHFGSMKKLKEASVEEIKEAGVPLNVAEEVHKHITAFNEKAKNTEQK.

The GIY-YIG domain occupies 15 to 92 (DQPGCYLMKD…IKKHDPRFNI (78 aa)). The UVR domain maps to 197–232 (KTVKNDLMKKMQEAAENMEFEKAGEFRDQINAIETT).

Belongs to the UvrC family. In terms of assembly, interacts with UvrB in an incision complex.

The protein resides in the cytoplasm. In terms of biological role, the UvrABC repair system catalyzes the recognition and processing of DNA lesions. UvrC both incises the 5' and 3' sides of the lesion. The N-terminal half is responsible for the 3' incision and the C-terminal half is responsible for the 5' incision. The chain is UvrABC system protein C from Listeria monocytogenes serotype 4a (strain HCC23).